The following is a 268-amino-acid chain: Phosphatidylglycerol--prolipoprotein diacylglyceryl transferase (268 aa).

7 consecutive transmembrane segments (helical) span residues 14 to 34 (IIFS…LIGF), 60 to 80 (LLFN…VLFY), 95 to 115 (VWEG…AMLV), 124 to 144 (FWVV…MGRI), 176 to 196 (SQLY…NWFI), 203 to 223 (GSVA…VEFF), and 238 to 258 (ISMG…FIVL). Residue R143 coordinates a 1,2-diacyl-sn-glycero-3-phospho-(1'-sn-glycerol).

Belongs to the Lgt family.

The protein localises to the cell inner membrane. It catalyses the reaction L-cysteinyl-[prolipoprotein] + a 1,2-diacyl-sn-glycero-3-phospho-(1'-sn-glycerol) = an S-1,2-diacyl-sn-glyceryl-L-cysteinyl-[prolipoprotein] + sn-glycerol 1-phosphate + H(+). The protein operates within protein modification; lipoprotein biosynthesis (diacylglyceryl transfer). Its function is as follows. Catalyzes the transfer of the diacylglyceryl group from phosphatidylglycerol to the sulfhydryl group of the N-terminal cysteine of a prolipoprotein, the first step in the formation of mature lipoproteins. This is Phosphatidylglycerol--prolipoprotein diacylglyceryl transferase from Mannheimia succiniciproducens (strain KCTC 0769BP / MBEL55E).